A 94-amino-acid polypeptide reads, in one-letter code: MSSFPVLNVGFSNVVFVSKILTILLADSAGAKRLRTEAKSENRLIDATCGRKTRSVLVLESGHILLSAIRPESLSKRLETGDNHIGEGEEESED.

Belongs to the RemA family.

The polypeptide is Putative regulatory protein LEPBI_I0950 (Leptospira biflexa serovar Patoc (strain Patoc 1 / ATCC 23582 / Paris)).